Here is a 518-residue protein sequence, read N- to C-terminus: Retinal dehydrogenase 2 (518 aa).

A Phosphotyrosine modification is found at Y168. NAD(+)-binding positions include 184–186 (IPW), 210–213 (KPAE), and 264–266 (STE). The active-site Proton acceptor is the E286. The active-site Nucleophile is C320. S351 bears the Phosphoserine mark. Residues 366-370 (KQYNK) and E417 contribute to the NAD(+) site.

It belongs to the aldehyde dehydrogenase family. Homotetramer. As to expression, found in testis and less abundantly in lung, brain, heart, liver and kidney.

It is found in the cytoplasm. The catalysed reaction is retinal + NAD(+) + H2O = retinoate + NADH + 2 H(+). It catalyses the reaction all-trans-retinal + NAD(+) + H2O = all-trans-retinoate + NADH + 2 H(+). The enzyme catalyses all-trans-13,14-dihydroretinal + NAD(+) + H2O = all-trans-13,14-dihydroretinoate + NADH + 2 H(+). It functions in the pathway cofactor metabolism; retinol metabolism. In terms of biological role, catalyzes the NAD-dependent oxidation of aldehyde substrates, such as all-trans-retinal and all-trans-13,14-dihydroretinal, to their corresponding carboxylic acids, all-trans-retinoate and all-trans-13,14-dihydroretinoate, respectively. Retinoate signaling is critical for the transcriptional control of many genes, for instance it is crucial for initiation of meiosis in both male and female. Recognizes retinal as substrate, both in its free form and when bound to cellular retinol-binding protein. Lacks activity with benzaldehyde, acetaldehyde and octanal. Displays complete lack of activity with citral. In Rattus norvegicus (Rat), this protein is Retinal dehydrogenase 2 (Aldh1a2).